Consider the following 732-residue polypeptide: Subtilisin-like protease SBT4.13 (732 aa).

The N-terminal stretch at 1–24 (MATLAASSSLLSCLLVLFLSSVSA) is a signal peptide. Positions 25–109 (VTDDKQVYIV…VFPNKKLQLQ (85 aa)) are cleaved as a propeptide — activation peptide. Residues 31 to 108 (VYIVYMGSLS…SVFPNKKLQL (78 aa)) enclose the Inhibitor I9 domain. The region spanning 113–579 (SWDFMGLKEG…SGHVDPIAAS (467 aa)) is the Peptidase S8 domain. Asp-141 (charge relay system) is an active-site residue. Asn-172 is a glycosylation site (N-linked (GlcNAc...) asparagine). His-196 acts as the Charge relay system in catalysis. Residue Asn-219 is glycosylated (N-linked (GlcNAc...) asparagine). The 85-residue stretch at 352-436 (DYPLVYGKSA…GLLTEDFESL (85 aa)) folds into the PA domain. Asn-458 is a glycosylation site (N-linked (GlcNAc...) asparagine). Ser-518 (charge relay system) is an active-site residue. Residues Asn-555, Asn-600, Asn-648, and Asn-658 are each glycosylated (N-linked (GlcNAc...) asparagine).

Belongs to the peptidase S8 family. In terms of processing, the C-terminal propeptide is autocleaved.

Its subcellular location is the secreted. The sequence is that of Subtilisin-like protease SBT4.13 from Arabidopsis thaliana (Mouse-ear cress).